We begin with the raw amino-acid sequence, 227 residues long: ATP synthase F(0) complex subunit a (227 aa).

6 helical membrane passes run 14 to 34 (LLGI…FPTP), 69 to 89 (WATI…LGLL), 99 to 119 (LSLN…IGML), 137 to 157 (LLIP…PLAL), 180 to 200 (FVLI…LFLL), and 202 to 222 (ILEV…LSLY).

It belongs to the ATPase A chain family. As to quaternary structure, component of the ATP synthase complex composed at least of ATP5F1A/subunit alpha, ATP5F1B/subunit beta, ATP5MC1/subunit c (homooctomer), MT-ATP6/subunit a, MT-ATP8/subunit 8, ATP5ME/subunit e, ATP5MF/subunit f, ATP5MG/subunit g, ATP5MK/subunit k, ATP5MJ/subunit j, ATP5F1C/subunit gamma, ATP5F1D/subunit delta, ATP5F1E/subunit epsilon, ATP5PF/subunit F6, ATP5PB/subunit b, ATP5PD/subunit d, ATP5PO/subunit OSCP. ATP synthase complex consists of a soluble F(1) head domain (subunits alpha(3) and beta(3)) - the catalytic core - and a membrane F(0) domain - the membrane proton channel (subunits c, a, 8, e, f, g, k and j). These two domains are linked by a central stalk (subunits gamma, delta, and epsilon) rotating inside the F1 region and a stationary peripheral stalk (subunits F6, b, d, and OSCP). Interacts with DNAJC30; interaction is direct.

It is found in the mitochondrion inner membrane. It catalyses the reaction H(+)(in) = H(+)(out). Subunit a, of the mitochondrial membrane ATP synthase complex (F(1)F(0) ATP synthase or Complex V) that produces ATP from ADP in the presence of a proton gradient across the membrane which is generated by electron transport complexes of the respiratory chain. ATP synthase complex consist of a soluble F(1) head domain - the catalytic core - and a membrane F(1) domain - the membrane proton channel. These two domains are linked by a central stalk rotating inside the F(1) region and a stationary peripheral stalk. During catalysis, ATP synthesis in the catalytic domain of F(1) is coupled via a rotary mechanism of the central stalk subunits to proton translocation. With the subunit c (ATP5MC1), forms the proton-conducting channel in the F(0) domain, that contains two crucial half-channels (inlet and outlet) that facilitate proton movement from the mitochondrial intermembrane space (IMS) into the matrix. Protons are taken up via the inlet half-channel and released through the outlet half-channel, following a Grotthuss mechanism. In Squalus acanthias (Spiny dogfish), this protein is ATP synthase F(0) complex subunit a.